The primary structure comprises 177 residues: VQ motif-containing protein 11 (177 aa).

The short motif at 25-34 is the VQ element; it reads FRNIVQKLTG. Residues S43, S99, S115, S142, and S145 each carry the phosphoserine modification. Over residues 115–133 the composition is skewed to basic and acidic residues; it reads SAREEHHAQPDKEEQKAIA. The disordered stretch occupies residues 115–177; the sequence is SAREEHHAQP…RIHEDNHRDS (63 aa). The span at 148–159 shows a compositional bias: low complexity; that stretch reads EPAPELLPLFPL. A Phosphoserine modification is found at S161. The span at 168–177 shows a compositional bias: basic and acidic residues; it reads RIHEDNHRDS.

In terms of processing, phosphorylated on serine residues by MPK6.

Its subcellular location is the nucleus. May modulate WRKY transcription factor activities. The chain is VQ motif-containing protein 11 from Arabidopsis thaliana (Mouse-ear cress).